Reading from the N-terminus, the 86-residue chain is Small ribosomal subunit protein eS27y (86 aa).

Residues 39 to 61 (CQGCFNITTVFSHSQTVVVCGNC) form a C4-type zinc finger.

The protein belongs to the eukaryotic ribosomal protein eS27 family. Requires Zn(2+) as cofactor.

May be involved in the elimination of damaged mRNA after UV irradiation. The protein is Small ribosomal subunit protein eS27y (RPS27B) of Arabidopsis thaliana (Mouse-ear cress).